We begin with the raw amino-acid sequence, 188 residues long: Putative manganese efflux pump MntP (188 aa).

6 helical membrane passes run 3–23, 39–59, 65–85, 110–130, 131–151, and 167–187; these read LFSLWVMAFGLSMDAFAVSIC, AGLYFGLFQAVMPLIGFLLGV, ITDYDHWVAFFLLALIGVNML, LGFATSIDALAVGVTFAFLSV, DIYSSVVTIGLITAALSIIGV, and ILGGLILIGLGVKILMEHTLF.

The protein belongs to the MntP (TC 9.B.29) family.

The protein localises to the cell inner membrane. In terms of biological role, probably functions as a manganese efflux pump. The polypeptide is Putative manganese efflux pump MntP (Mannheimia succiniciproducens (strain KCTC 0769BP / MBEL55E)).